A 352-amino-acid chain; its full sequence is C-C chemokine receptor type 5 (352 aa).

Residues 1–30 (MDYQVSSPTYDIDYYTSEPCQKINVKQIAA) are Extracellular-facing. At Y3 the chain carries Sulfotyrosine. 2 O-linked (GalNAc...) serine glycosylation sites follow: S6 and S7. A sulfotyrosine mark is found at Y10, Y14, and Y15. 2 disulfides stabilise this stretch: C20-C269 and C101-C178. A helical membrane pass occupies residues 31–58 (RLLPPLYSLVFIFGFVGNILVVLILINC). The Cytoplasmic portion of the chain corresponds to 59-68 (KRLKSMTDIY). A helical transmembrane segment spans residues 69-89 (LLNLAISDLLFLLTVPFWAHY). The Extracellular portion of the chain corresponds to 90 to 102 (AAAQWDFGNTMCQ). Residues 103–124 (LLTGLYFIGFFSGIFFIILLTI) form a helical membrane-spanning segment. Over 125–141 (DRYLAIVHAVFALKART) the chain is Cytoplasmic. A helical membrane pass occupies residues 142 to 166 (VTFGVVTSVITWVVAVFASLPGIIF). Topologically, residues 167 to 198 (TRSQREGLHYTCSSHFPYSQYQFWKNFQTLKI) are extracellular. Residues 199-218 (VILGLVLPLLVMVICYSGIL) traverse the membrane as a helical segment. The Cytoplasmic portion of the chain corresponds to 219-235 (KTLLRCRNEKKRHRAVR). A helical membrane pass occupies residues 236 to 260 (LIFTIMIVYFLFWAPYNIVLLLNTF). At 261-277 (QEFFGLNNCSSSNRLDQ) the chain is on the extracellular side. Residues 278-301 (AMQVTETLGMTHCCINPIIYAFVG) traverse the membrane as a helical segment. At 302-352 (EKFRNYLLVFFQKHIAKRFCKCCSIFQQEAPERASSVYTRSTGEQEISVGL) the chain is on the cytoplasmic side. Residues C321, C323, and C324 are each lipidated (S-palmitoyl cysteine). 4 positions are modified to phosphoserine; by BARK1: S336, S337, S342, and S349.

The protein belongs to the G-protein coupled receptor 1 family. In terms of assembly, interacts with PRAF2. Efficient ligand binding to CCL3/MIP-1alpha and CCL4/MIP-1beta requires sulfation, O-glycosylation and sialic acid modifications. Glycosylation on Ser-6 is required for efficient binding of CCL4. Interacts with GRK2. Interacts with ARRB1 and ARRB2. Interacts with CNIH4. Interacts with S100A4; this interaction stimulates T-lymphocyte chemotaxis. Post-translationally, sulfated on at least 2 of the N-terminal tyrosines. Sulfation is required for efficient binding of the chemokines, CCL3 and CCL4. In terms of processing, palmitoylation in the C-terminal is important for cell surface expression. Phosphorylation on serine residues in the C-terminal is stimulated by binding CC chemokines especially by APO-RANTES. Post-translationally, O-glycosylated, but not N-glycosylated. Ser-6 appears to be the major site even if Ser-7 may be also O-glycosylated. Also sialylated glycans present which contribute to chemokine binding. Thr-16 and Ser-17 may also be glycosylated and, if so, with small moieties such as a T-antigen.

Its subcellular location is the cell membrane. Its function is as follows. Receptor for a number of inflammatory CC-chemokines including CCL3/MIP-1-alpha, CCL4/MIP-1-beta and RANTES and subsequently transduces a signal by increasing the intracellular calcium ion level. May play a role in the control of granulocytic lineage proliferation or differentiation. Participates in T-lymphocyte migration to the infection site by acting as a chemotactic receptor. The sequence is that of C-C chemokine receptor type 5 (CCR5) from Papio anubis (Olive baboon).